The sequence spans 393 residues: Phosphoglycerate kinase (393 aa).

Substrate-binding positions include 21–23 (DLN), Arg36, 59–62 (HLGR), Arg113, and Arg146. ATP is bound by residues Lys197, Glu319, and 345-348 (GGDT).

This sequence belongs to the phosphoglycerate kinase family. As to quaternary structure, monomer.

It is found in the cytoplasm. The catalysed reaction is (2R)-3-phosphoglycerate + ATP = (2R)-3-phospho-glyceroyl phosphate + ADP. It participates in carbohydrate degradation; glycolysis; pyruvate from D-glyceraldehyde 3-phosphate: step 2/5. This Nitratidesulfovibrio vulgaris (strain ATCC 29579 / DSM 644 / CCUG 34227 / NCIMB 8303 / VKM B-1760 / Hildenborough) (Desulfovibrio vulgaris) protein is Phosphoglycerate kinase.